A 221-amino-acid polypeptide reads, in one-letter code: Putative hemin import ATP-binding protein HrtA (221 aa).

In terms of domain architecture, ABC transporter spans 3–221 (LVVEDIVKNF…IELEDGKITD (219 aa)). Residue 39-46 (GASGSGKT) participates in ATP binding.

It belongs to the ABC transporter superfamily. HrtA family. As to quaternary structure, the complex is composed of two ATP-binding proteins (HrtA), two transmembrane proteins (HrtB) and a solute-binding protein.

The protein resides in the cell membrane. Part of the ABC transporter complex hrt involved in hemin import. Responsible for energy coupling to the transport system. The chain is Putative hemin import ATP-binding protein HrtA (hrtA) from Staphylococcus aureus (strain USA300).